The following is a 265-amino-acid chain: 2-C-methyl-D-erythritol 4-phosphate cytidylyltransferase (265 aa).

Residues 231-241 are compositionally biased toward basic and acidic residues; that stretch reads DRGGASREAER. The disordered stretch occupies residues 231–265; sequence DRGGASREAERSAMPSAATSVFSGARSAASGSEEV. The segment covering 253–265 has biased composition (low complexity); that stretch reads SGARSAASGSEEV.

The protein belongs to the IspD/TarI cytidylyltransferase family. IspD subfamily.

It carries out the reaction 2-C-methyl-D-erythritol 4-phosphate + CTP + H(+) = 4-CDP-2-C-methyl-D-erythritol + diphosphate. It functions in the pathway isoprenoid biosynthesis; isopentenyl diphosphate biosynthesis via DXP pathway; isopentenyl diphosphate from 1-deoxy-D-xylulose 5-phosphate: step 2/6. Catalyzes the formation of 4-diphosphocytidyl-2-C-methyl-D-erythritol from CTP and 2-C-methyl-D-erythritol 4-phosphate (MEP). In Xanthomonas campestris pv. campestris (strain 8004), this protein is 2-C-methyl-D-erythritol 4-phosphate cytidylyltransferase.